A 48-amino-acid chain; its full sequence is Gas vesicle protein A (48 aa).

The protein belongs to the gas vesicle GvpA family. As to quaternary structure, the gas vesicle shell is 2 nm thick and consists of a single layer of this protein. It forms helical ribs nearly perpendicular to the long axis of the vesicle.

Its subcellular location is the gas vesicle shell. In terms of biological role, gas vesicles are hollow, gas filled proteinaceous nanostructures found in some microorganisms. During planktonic growth they allow positioning of the organism at a favorable depth for light or nutrient acquisition. GvpA forms the protein shell. The sequence is that of Gas vesicle protein A from Spirulina sp. (strain CCAP 1475/10).